The chain runs to 434 residues: Histidinol dehydrogenase (434 aa).

Substrate-binding residues include serine 242, glutamine 264, and histidine 267. The Zn(2+) site is built by glutamine 264 and histidine 267. Active-site proton acceptor residues include glutamate 332 and histidine 333. 4 residues coordinate substrate: histidine 333, aspartate 366, glutamate 420, and histidine 425. Residue aspartate 366 participates in Zn(2+) binding. Histidine 425 serves as a coordination point for Zn(2+).

The protein belongs to the histidinol dehydrogenase family. Requires Zn(2+) as cofactor.

The enzyme catalyses L-histidinol + 2 NAD(+) + H2O = L-histidine + 2 NADH + 3 H(+). Its pathway is amino-acid biosynthesis; L-histidine biosynthesis; L-histidine from 5-phospho-alpha-D-ribose 1-diphosphate: step 9/9. Functionally, catalyzes the sequential NAD-dependent oxidations of L-histidinol to L-histidinaldehyde and then to L-histidine. The chain is Histidinol dehydrogenase from Oleidesulfovibrio alaskensis (strain ATCC BAA-1058 / DSM 17464 / G20) (Desulfovibrio alaskensis).